Here is a 456-residue protein sequence, read N- to C-terminus: Exodeoxyribonuclease 7 large subunit (456 aa).

This sequence belongs to the XseA family. As to quaternary structure, heterooligomer composed of large and small subunits.

The protein localises to the cytoplasm. It carries out the reaction Exonucleolytic cleavage in either 5'- to 3'- or 3'- to 5'-direction to yield nucleoside 5'-phosphates.. Its function is as follows. Bidirectionally degrades single-stranded DNA into large acid-insoluble oligonucleotides, which are then degraded further into small acid-soluble oligonucleotides. This is Exodeoxyribonuclease 7 large subunit from Escherichia coli (strain ATCC 8739 / DSM 1576 / NBRC 3972 / NCIMB 8545 / WDCM 00012 / Crooks).